The primary structure comprises 286 residues: Energy-coupling factor transporter ATP-binding protein EcfA2 (286 aa).

Residues 3-246 (IQFNQVSYIY…KTQLLKWHIE (244 aa)) form the ABC transporter domain. 40-47 (GQTGSGKS) serves as a coordination point for ATP.

The protein belongs to the ABC transporter superfamily. Energy-coupling factor EcfA family. Forms a stable energy-coupling factor (ECF) transporter complex composed of 2 membrane-embedded substrate-binding proteins (S component), 2 ATP-binding proteins (A component) and 2 transmembrane proteins (T component).

It is found in the cell membrane. Functionally, ATP-binding (A) component of a common energy-coupling factor (ECF) ABC-transporter complex. Unlike classic ABC transporters this ECF transporter provides the energy necessary to transport a number of different substrates. The chain is Energy-coupling factor transporter ATP-binding protein EcfA2 from Staphylococcus epidermidis (strain ATCC 35984 / DSM 28319 / BCRC 17069 / CCUG 31568 / BM 3577 / RP62A).